Consider the following 201-residue polypeptide: 3-isopropylmalate dehydratase small subunit (201 aa).

This sequence belongs to the LeuD family. LeuD type 1 subfamily. Heterodimer of LeuC and LeuD.

The enzyme catalyses (2R,3S)-3-isopropylmalate = (2S)-2-isopropylmalate. It participates in amino-acid biosynthesis; L-leucine biosynthesis; L-leucine from 3-methyl-2-oxobutanoate: step 2/4. In terms of biological role, catalyzes the isomerization between 2-isopropylmalate and 3-isopropylmalate, via the formation of 2-isopropylmaleate. This is 3-isopropylmalate dehydratase small subunit from Methylorubrum extorquens (strain CM4 / NCIMB 13688) (Methylobacterium extorquens).